Reading from the N-terminus, the 538-residue chain is Putative cysteine ligase BshC (538 aa).

Residues Ile419–Glu445 are a coiled coil.

Belongs to the BshC family.

In terms of biological role, involved in bacillithiol (BSH) biosynthesis. May catalyze the last step of the pathway, the addition of cysteine to glucosamine malate (GlcN-Mal) to generate BSH. The chain is Putative cysteine ligase BshC from Lysinibacillus sphaericus (strain C3-41).